Reading from the N-terminus, the 389-residue chain is Probable dual-specificity RNA methyltransferase RlmN (389 aa).

Glu-114 (proton acceptor) is an active-site residue. One can recognise a Radical SAM core domain in the interval 120-358 (QHYGLSVCVT…CVVRQEHGTD (239 aa)). The cysteines at positions 127 and 363 are disulfide-linked. [4Fe-4S] cluster is bound by residues Cys-134, Cys-138, and Cys-141. Residues 186–187 (GE), Ser-218, 241–243 (SLH), and Asn-319 contribute to the S-adenosyl-L-methionine site. Catalysis depends on Cys-363, which acts as the S-methylcysteine intermediate. The tract at residues 370–389 (TMKRDRQKAVAEASGKSEGK) is disordered. The segment covering 371–389 (MKRDRQKAVAEASGKSEGK) has biased composition (basic and acidic residues).

It belongs to the radical SAM superfamily. RlmN family. It depends on [4Fe-4S] cluster as a cofactor.

It is found in the cytoplasm. The catalysed reaction is adenosine(2503) in 23S rRNA + 2 reduced [2Fe-2S]-[ferredoxin] + 2 S-adenosyl-L-methionine = 2-methyladenosine(2503) in 23S rRNA + 5'-deoxyadenosine + L-methionine + 2 oxidized [2Fe-2S]-[ferredoxin] + S-adenosyl-L-homocysteine. It carries out the reaction adenosine(37) in tRNA + 2 reduced [2Fe-2S]-[ferredoxin] + 2 S-adenosyl-L-methionine = 2-methyladenosine(37) in tRNA + 5'-deoxyadenosine + L-methionine + 2 oxidized [2Fe-2S]-[ferredoxin] + S-adenosyl-L-homocysteine. Its function is as follows. Specifically methylates position 2 of adenine 2503 in 23S rRNA and position 2 of adenine 37 in tRNAs. This chain is Probable dual-specificity RNA methyltransferase RlmN, found in Streptococcus thermophilus (strain CNRZ 1066).